The chain runs to 317 residues: Glutamyl-tRNA reductase-binding protein, chloroplastic (317 aa).

The transit peptide at 1–42 directs the protein to the chloroplast; sequence MQLQTQSFALNLLPSPNFAKPIERREFISLKRDPSRPISLRC.

In terms of assembly, interacts with HEMA1 and forms a heterotetramer of two GLUTRBP and two HEMA1 subunits.

Its subcellular location is the plastid. It localises to the chloroplast stroma. Functionally, involved in the regulation of glutamyl-tRNA reductase (GluTR) which is important for the synthesis and distribution of 5-aminolevulinate, a precursor in heme and chlorophyll biosynthesis. Stimulates GluTR activity and regulates glutamate-1-semialdehyde release. May play a role in heme metabolism. Necessary for efficient photosynthetic electron transport in chloroplasts. The chain is Glutamyl-tRNA reductase-binding protein, chloroplastic from Arabidopsis thaliana (Mouse-ear cress).